We begin with the raw amino-acid sequence, 295 residues long: RNA polymerase sigma factor RpoH (295 aa).

The segment at 52–121 is sigma-70 factor domain-2; sequence MVTSHLRLVA…IQEYILRSWS (70 aa). Residues 76–79 carry the Interaction with polymerase core subunit RpoC motif; sequence EVIS. The interval 230-281 is sigma-70 factor domain-4; that stretch reads AMVELTDRERHILTERRLKDDPTTLEELAAQYGVSRERVRQIEVRAFEKLQK. Positions 254–273 form a DNA-binding region, H-T-H motif; the sequence is LEELAAQYGVSRERVRQIEV.

Belongs to the sigma-70 factor family. RpoH subfamily. As to quaternary structure, interacts with the RNA polymerase core enzyme.

It localises to the cytoplasm. Functionally, sigma factors are initiation factors that promote the attachment of RNA polymerase to specific initiation sites and are then released. This sigma factor is involved in regulation of expression of heat shock genes. The polypeptide is RNA polymerase sigma factor RpoH (Caulobacter vibrioides (strain ATCC 19089 / CIP 103742 / CB 15) (Caulobacter crescentus)).